Consider the following 501-residue polypeptide: ATP synthase subunit alpha (501 aa).

169 to 176 (GDRQTGKT) contacts ATP.

Belongs to the ATPase alpha/beta chains family. F-type ATPases have 2 components, CF(1) - the catalytic core - and CF(0) - the membrane proton channel. CF(1) has five subunits: alpha(3), beta(3), gamma(1), delta(1), epsilon(1). CF(0) has three main subunits: a(1), b(2) and c(9-12). The alpha and beta chains form an alternating ring which encloses part of the gamma chain. CF(1) is attached to CF(0) by a central stalk formed by the gamma and epsilon chains, while a peripheral stalk is formed by the delta and b chains.

Its subcellular location is the cell membrane. The enzyme catalyses ATP + H2O + 4 H(+)(in) = ADP + phosphate + 5 H(+)(out). Produces ATP from ADP in the presence of a proton gradient across the membrane. The alpha chain is a regulatory subunit. This is ATP synthase subunit alpha from Streptococcus agalactiae serotype III (strain NEM316).